The sequence spans 303 residues: Putative 1-phosphofructokinase (303 aa).

Residues 217-222 (SDGDKG) and 249-250 (GD) contribute to the ATP site. The active-site Proton acceptor is Asp250.

The protein belongs to the carbohydrate kinase PfkB family.

The catalysed reaction is beta-D-fructose 1-phosphate + ATP = beta-D-fructose 1,6-bisphosphate + ADP + H(+). Catalyzes the ATP-dependent phosphorylation of fructose-l-phosphate to fructose-l,6-bisphosphate. The polypeptide is Putative 1-phosphofructokinase (fruK) (Mycoplasma genitalium (strain ATCC 33530 / DSM 19775 / NCTC 10195 / G37) (Mycoplasmoides genitalium)).